The primary structure comprises 115 residues: NAD(P)H-quinone oxidoreductase subunit M (115 aa).

It belongs to the complex I NdhM subunit family. As to quaternary structure, NDH-1 can be composed of about 15 different subunits; different subcomplexes with different compositions have been identified which probably have different functions.

The protein resides in the cellular thylakoid membrane. The catalysed reaction is a plastoquinone + NADH + (n+1) H(+)(in) = a plastoquinol + NAD(+) + n H(+)(out). It catalyses the reaction a plastoquinone + NADPH + (n+1) H(+)(in) = a plastoquinol + NADP(+) + n H(+)(out). NDH-1 shuttles electrons from an unknown electron donor, via FMN and iron-sulfur (Fe-S) centers, to quinones in the respiratory and/or the photosynthetic chain. The immediate electron acceptor for the enzyme in this species is believed to be plastoquinone. Couples the redox reaction to proton translocation, and thus conserves the redox energy in a proton gradient. Cyanobacterial NDH-1 also plays a role in inorganic carbon-concentration. The polypeptide is NAD(P)H-quinone oxidoreductase subunit M (Prochlorococcus marinus (strain NATL1A)).